The chain runs to 248 residues: 14-3-3 protein sigma (248 aa).

3 positions are modified to phosphoserine: Ser-5, Ser-74, and Ser-248.

It belongs to the 14-3-3 family. In terms of assembly, homodimer. Interacts with KRT17 and SAMSN1. Found in a complex with XPO7, EIF4A1, ARHGAP1, VPS26A, VPS29 and VPS35. Interacts with GAB2. Interacts with SRPK2. Interacts with COPS6. Interacts with COP1; this interaction leads to proteasomal degradation. Interacts with the 'Thr-369' phosphorylated form of DAPK2. Interacts with PI4KB. Interacts with SLITRK1. Interacts with LRRK2; this interaction is dependent on LRRK2 phosphorylation. Interacts with PKP3 (via N-terminus); the interaction maintains the cytoplasmic pool of PKP3, facilitates PKP3 exchange at desmosomes and restricts PKP3 localization to existing desmosome cell junctions. Interacts with LCP2. Ubiquitinated. Ubiquitination by RFFL induces proteasomal degradation and indirectly regulates p53/TP53 activation.

It is found in the cytoplasm. The protein resides in the nucleus. It localises to the secreted. Adapter protein implicated in the regulation of a large spectrum of both general and specialized signaling pathways. Binds to a large number of partners, usually by recognition of a phosphoserine or phosphothreonine motif. Binding generally results in the modulation of the activity of the binding partner. Promotes cytosolic retention of GBP1 GTPase by binding to phosphorylated GBP1, thereby inhibiting the innate immune response. Also acts as a TP53/p53-regulated inhibitor of G2/M progression. When bound to KRT17, regulates protein synthesis and epithelial cell growth by stimulating Akt/mTOR pathway. Acts to maintain desmosome cell junction adhesion in epithelial cells via interacting with and sequestering PKP3 to the cytoplasm, thereby restricting its translocation to existing desmosome structures and therefore maintaining desmosome protein homeostasis. Also acts to facilitate PKP3 exchange at desmosome plaques, thereby maintaining keratinocyte intercellular adhesion. May also regulate MDM2 autoubiquitination and degradation and thereby activate p53/TP53. In Bos taurus (Bovine), this protein is 14-3-3 protein sigma (SFN).